The primary structure comprises 338 residues: Lipoate-protein ligase A (338 aa).

Residues 29–216 (PATQRVLFLW…AFFAHYGERV (188 aa)) enclose the BPL/LPL catalytic domain. ATP contacts are provided by residues Arg-71, 76–79 (GAVF), and Lys-134. A (R)-lipoate-binding site is contributed by Lys-134.

The protein belongs to the LplA family. As to quaternary structure, monomer.

The protein resides in the cytoplasm. It carries out the reaction L-lysyl-[lipoyl-carrier protein] + (R)-lipoate + ATP = N(6)-[(R)-lipoyl]-L-lysyl-[lipoyl-carrier protein] + AMP + diphosphate + H(+). The protein operates within protein modification; protein lipoylation via exogenous pathway; protein N(6)-(lipoyl)lysine from lipoate: step 1/2. Its pathway is protein modification; protein lipoylation via exogenous pathway; protein N(6)-(lipoyl)lysine from lipoate: step 2/2. Catalyzes both the ATP-dependent activation of exogenously supplied lipoate to lipoyl-AMP and the transfer of the activated lipoyl onto the lipoyl domains of lipoate-dependent enzymes. In Escherichia coli (strain 55989 / EAEC), this protein is Lipoate-protein ligase A.